The sequence spans 690 residues: Polyribonucleotide nucleotidyltransferase (690 aa).

Positions 482 and 488 each coordinate Mg(2+). In terms of domain architecture, KH spans 549 to 608; sequence PRIITIQINPDRIRDVIGPGGKVIRALTEETGATIDIQDNGTVTIASVDGEAGAAAKRRI. The region spanning 618–686 is the S1 motif domain; sequence DTIYDGKVAK…RQGKIKLSMK (69 aa).

Belongs to the polyribonucleotide nucleotidyltransferase family. In terms of assembly, component of the RNA degradosome, which is a multiprotein complex involved in RNA processing and mRNA degradation. Mg(2+) serves as cofactor.

The protein localises to the cytoplasm. The catalysed reaction is RNA(n+1) + phosphate = RNA(n) + a ribonucleoside 5'-diphosphate. Functionally, involved in mRNA degradation. Catalyzes the phosphorolysis of single-stranded polyribonucleotides processively in the 3'- to 5'-direction. This chain is Polyribonucleotide nucleotidyltransferase, found in Acidithiobacillus ferrooxidans (strain ATCC 23270 / DSM 14882 / CIP 104768 / NCIMB 8455) (Ferrobacillus ferrooxidans (strain ATCC 23270)).